We begin with the raw amino-acid sequence, 158 residues long: uncharacterized protein (158 aa).

This is an uncharacterized protein from Bacillus subtilis (Bacteriophage phi-105).